The chain runs to 139 residues: Putative nickel-responsive regulator (139 aa).

Residues H79, H90, H92, and C98 each contribute to the Ni(2+) site.

It belongs to the transcriptional regulatory CopG/NikR family. It depends on Ni(2+) as a cofactor.

Its function is as follows. Transcriptional regulator. The chain is Putative nickel-responsive regulator from Nitratidesulfovibrio vulgaris (strain DSM 19637 / Miyazaki F) (Desulfovibrio vulgaris).